Reading from the N-terminus, the 415-residue chain is WD repeat and FYVE domain-containing protein 2 (415 aa).

4 WD repeats span residues 71–103 (HHFM…YEFS), 119–148 (CHAG…IVWH), 202–232 (AHTN…IMWD), and 245–284 (GHNG…VETP). An FYVE-type zinc finger spans residues 286 to 357 (WKTSDCCQKC…ICNDCNARMK (72 aa)). Zn(2+) contacts are provided by Cys292, Cys295, Cys319, Cys322, Cys327, Cys330, Cys349, and Cys352. One copy of the WD 5 repeat lies at 373–403 (EIHTGITAMHLQETLGLLVTSGQNRVIMIWD).

Functionally, plays a role in coelomocyte endocytosis. The polypeptide is WD repeat and FYVE domain-containing protein 2 (wdfy-2) (Caenorhabditis elegans).